The primary structure comprises 197 residues: GTP cyclohydrolase-2 (197 aa).

49–53 is a GTP binding site; the sequence is RVHSE. Positions 54, 65, and 67 each coordinate Zn(2+). Residues Gln-70, 92 to 94, and Thr-114 contribute to the GTP site; that span reads EGR. The active-site Proton acceptor is Asp-126. Catalysis depends on Arg-128, which acts as the Nucleophile. GTP is bound by residues Thr-149 and Lys-154.

This sequence belongs to the GTP cyclohydrolase II family. Homodimer. The cofactor is Zn(2+).

It carries out the reaction GTP + 4 H2O = 2,5-diamino-6-hydroxy-4-(5-phosphoribosylamino)-pyrimidine + formate + 2 phosphate + 3 H(+). Its pathway is cofactor biosynthesis; riboflavin biosynthesis; 5-amino-6-(D-ribitylamino)uracil from GTP: step 1/4. Catalyzes the conversion of GTP to 2,5-diamino-6-ribosylamino-4(3H)-pyrimidinone 5'-phosphate (DARP), formate and pyrophosphate. The protein is GTP cyclohydrolase-2 of Cronobacter sakazakii (strain ATCC BAA-894) (Enterobacter sakazakii).